The sequence spans 256 residues: Omega-amidase YafV (256 aa).

Residues 4–234 (LKITLLQQPL…ATRIDAELSM (231 aa)) enclose the CN hydrolase domain. The active-site Proton acceptor is Glu-42. Lys-107 is an active-site residue. Cys-141 serves as the catalytic Nucleophile.

This sequence belongs to the carbon-nitrogen hydrolase superfamily. NIT1/NIT2 family.

It catalyses the reaction a monoamide of a dicarboxylate + H2O = a dicarboxylate + NH4(+). Functionally, hydrolyzes alpha-ketoglutaramate (a-KGM) to alpha-ketoglutarate (alpha-KG) and ammonia (specific activity 6.65 umol/min/mg), has weak activity on L-glutamine, almost no activity on deaminated glutathione (dGSH) and none on glutathione. May function as a metabolite repair enzyme. The sequence is that of Omega-amidase YafV (yafV) from Escherichia coli (strain B / BL21-DE3).